Reading from the N-terminus, the 1088-residue chain is DNA damage-binding protein 1b (1088 aa).

Belongs to the DDB1 family. As to quaternary structure, interacts with DDA1. Binds to KTN80.2/DWA3. Interacts with HTD1.

It localises to the nucleus. It participates in protein modification; protein ubiquitination. Its function is as follows. Component of light signal transduction machinery. Involved in repression of photomorphogenesis in darkness. Plays a role in DNA repair by forming with DDB2 the UV-damaged DNA-binding protein complex (UV-DDB). This chain is DNA damage-binding protein 1b, found in Arabidopsis thaliana (Mouse-ear cress).